The primary structure comprises 224 residues: ATP phosphoribosyltransferase (224 aa).

It belongs to the ATP phosphoribosyltransferase family. Short subfamily. Heteromultimer composed of HisG and HisZ subunits.

Its subcellular location is the cytoplasm. The catalysed reaction is 1-(5-phospho-beta-D-ribosyl)-ATP + diphosphate = 5-phospho-alpha-D-ribose 1-diphosphate + ATP. It functions in the pathway amino-acid biosynthesis; L-histidine biosynthesis; L-histidine from 5-phospho-alpha-D-ribose 1-diphosphate: step 1/9. Catalyzes the condensation of ATP and 5-phosphoribose 1-diphosphate to form N'-(5'-phosphoribosyl)-ATP (PR-ATP). Has a crucial role in the pathway because the rate of histidine biosynthesis seems to be controlled primarily by regulation of HisG enzymatic activity. The chain is ATP phosphoribosyltransferase from Cupriavidus taiwanensis (strain DSM 17343 / BCRC 17206 / CCUG 44338 / CIP 107171 / LMG 19424 / R1) (Ralstonia taiwanensis (strain LMG 19424)).